A 374-amino-acid chain; its full sequence is 8-amino-7-oxononanoate synthase (374 aa).

2 residues coordinate substrate: arginine 22 and arginine 29. A pyridoxal 5'-phosphate-binding site is contributed by 109 to 110; the sequence is GY. Substrate is bound at residue histidine 134. Pyridoxal 5'-phosphate contacts are provided by residues serine 182, 207–210, and 227–230; these read DDAH and TLSK. At lysine 230 the chain carries N6-(pyridoxal phosphate)lysine. Position 339 (threonine 339) interacts with substrate.

This sequence belongs to the class-II pyridoxal-phosphate-dependent aminotransferase family. BioF subfamily. Homodimer. Pyridoxal 5'-phosphate is required as a cofactor.

It catalyses the reaction 6-carboxyhexanoyl-[ACP] + L-alanine + H(+) = (8S)-8-amino-7-oxononanoate + holo-[ACP] + CO2. Its pathway is cofactor biosynthesis; biotin biosynthesis. In terms of biological role, catalyzes the decarboxylative condensation of pimeloyl-[acyl-carrier protein] and L-alanine to produce 8-amino-7-oxononanoate (AON), [acyl-carrier protein], and carbon dioxide. This Methylobacterium radiotolerans (strain ATCC 27329 / DSM 1819 / JCM 2831 / NBRC 15690 / NCIMB 10815 / 0-1) protein is 8-amino-7-oxononanoate synthase.